A 469-amino-acid polypeptide reads, in one-letter code: Glutamate--tRNA ligase (469 aa).

Positions Pro9–Gly19 match the 'HIGH' region motif. A 'KMSKS' region motif is present at residues Lys236–Arg240. Position 239 (Lys239) interacts with ATP.

Belongs to the class-I aminoacyl-tRNA synthetase family. Glutamate--tRNA ligase type 1 subfamily. As to quaternary structure, monomer.

It is found in the cytoplasm. It carries out the reaction tRNA(Glu) + L-glutamate + ATP = L-glutamyl-tRNA(Glu) + AMP + diphosphate. Catalyzes the attachment of glutamate to tRNA(Glu) in a two-step reaction: glutamate is first activated by ATP to form Glu-AMP and then transferred to the acceptor end of tRNA(Glu). The chain is Glutamate--tRNA ligase from Shewanella amazonensis (strain ATCC BAA-1098 / SB2B).